Reading from the N-terminus, the 403-residue chain is Formin-like protein 21b (403 aa).

The 380-residue stretch at Met1–Lys380 folds into the FH2 domain. The disordered stretch occupies residues Ala373 to Ile403.

This sequence belongs to the formin-like family. Class-II subfamily.

The protein is Formin-like protein 21b (FH21B) of Arabidopsis thaliana (Mouse-ear cress).